We begin with the raw amino-acid sequence, 514 residues long: Alstonine synthase (514 aa).

Residues 4-24 (PQFSCLLPAFFLLVVFLFLLI) form a helical membrane-spanning segment. Asn-428 carries an N-linked (GlcNAc...) asparagine glycan. Position 450 (Cys-450) interacts with heme.

It belongs to the cytochrome P450 family. Heme is required as a cofactor.

The protein resides in the membrane. The enzyme catalyses tetrahydroalstonine + A + reduced [NADPH--hemoprotein reductase] + O2 = alstonine + AH2 + oxidized [NADPH--hemoprotein reductase] + 2 H2O + H(+). The protein operates within alkaloid biosynthesis. In terms of biological role, a cytochrome P450 monooxygenase involved in the biosynthesis of pentacyclic alkaloids natural products such as alstonine, putative antipsychotic compounds. Catalyzes the conversion of tetrahydroalstonine to alstonine. No oxidative activity towards ajmalicine. The polypeptide is Alstonine synthase (Alstonia scholaris (Dogbane)).